A 230-amino-acid chain; its full sequence is Urease accessory protein UreF (230 aa).

It belongs to the UreF family. As to quaternary structure, ureD, UreF and UreG form a complex that acts as a GTP-hydrolysis-dependent molecular chaperone, activating the urease apoprotein by helping to assemble the nickel containing metallocenter of UreC. The UreE protein probably delivers the nickel.

It localises to the cytoplasm. Its function is as follows. Required for maturation of urease via the functional incorporation of the urease nickel metallocenter. The polypeptide is Urease accessory protein UreF (Cupriavidus taiwanensis (strain DSM 17343 / BCRC 17206 / CCUG 44338 / CIP 107171 / LMG 19424 / R1) (Ralstonia taiwanensis (strain LMG 19424))).